The following is a 279-amino-acid chain: Dermonecrotic toxin StSicTox-betaIB1i (279 aa).

His12 is an active-site residue. Residues Glu32 and Asp34 each coordinate Mg(2+). Catalysis depends on His48, which acts as the Nucleophile. 2 cysteine pairs are disulfide-bonded: Cys52–Cys58 and Cys54–Cys198. Mg(2+) is bound at residue Asp92.

This sequence belongs to the arthropod phospholipase D family. Class II subfamily. Class IIb sub-subfamily. It depends on Mg(2+) as a cofactor. Expressed by the venom gland.

The protein resides in the secreted. The enzyme catalyses an N-(acyl)-sphingosylphosphocholine = an N-(acyl)-sphingosyl-1,3-cyclic phosphate + choline. The catalysed reaction is N-hexanoyl-sphing-4-enine-1-phosphocholine = N-(hexanoyl)-sphing-4-enine-1,3-cyclic phosphate + choline. It catalyses the reaction an N-(acyl)-sphingosylphosphoethanolamine = an N-(acyl)-sphingosyl-1,3-cyclic phosphate + ethanolamine. It carries out the reaction N-dodecanoyl-heptadecasphing-4-enine-1-phosphoethanolamine = N-dodecanoyl-heptadecasphing-4-enine-1,3-cyclic phosphate + ethanolamine. The enzyme catalyses a 1-acyl-sn-glycero-3-phosphoethanolamine = a 1-acyl-sn-glycero-2,3-cyclic phosphate + ethanolamine. The catalysed reaction is 1-tetradecanoyl-sn-glycero-3-phosphoethanolamine = 1-tetradecanoyl-sn-glycero-2,3-cyclic phosphate + ethanolamine. Functionally, dermonecrotic toxins cleave the phosphodiester linkage between the phosphate and headgroup of certain phospholipids (sphingolipid and lysolipid substrates), forming an alcohol (often choline) and a cyclic phosphate. This toxin acts on lysophosphatidylethanolamine (LPE) and ceramide phosphoethanolamine (CPE) with high activity. This toxin acts on sphingomyelin (SM) with very low activity and is not active on lysophosphatidylserine (LPS), lysophosphatidylcholine (LPC) and lysophosphatidylglycerol (LPG). It acts by transphosphatidylation, releasing exclusively cyclic phosphate as second products. It is not surprising that spider toxins have affinity for ethanolamine-containing sphingolipids since they are common in insect prey. Induces dermonecrosis, hemolysis, increased vascular permeability, edema, inflammatory response, and platelet aggregation. This is Dermonecrotic toxin StSicTox-betaIB1i from Sicarius terrosus (Cave spider).